The chain runs to 975 residues: Cation-chloride cotransporter 1 (975 aa).

Disordered regions lie at residues 1 to 29 (MDSG…SKYR) and 104 to 124 (EQIQ…TQGH). Residues 1–132 (MDSGDIEEAG…GHPKPPALKM (132 aa)) are Cytoplasmic-facing. The helical transmembrane segment at 133–153 (GTMMGVFVPCLQNILGIIYYI) threads the bilayer. Residues 154–167 (RFTWIVGMAGIGQG) are Extracellular-facing. Residues 168–188 (LVLVFLCGLCTFLTTISLSAI) traverse the membrane as a helical segment. The Cytoplasmic portion of the chain corresponds to 189-214 (ATNGAMKGGGPYYLIGRALGPEVGIS). The helical transmembrane segment at 215–235 (IGLCFFLGNAVAGALYVLGAV) threads the bilayer. At 236–273 (ETFLKAFPAAGIFRETITKVNGTAVSESIQSPNSHDLQ) the chain is on the extracellular side. An N-linked (GlcNAc...) asparagine glycan is attached at N256. A helical transmembrane segment spans residues 274 to 294 (VYGIVVTILLCFIVFGGVKMI). Residues 295-296 (NR) lie on the Cytoplasmic side of the membrane. A helical transmembrane segment spans residues 297-317 (VAPAFLVPVLLSIFCIFIGIF). Over 318-359 (LAKTDDPDNGITGLRLKSFKDNWGSAYQMTNDAGIPDPTGGT) the chain is Extracellular. Residues 360 to 380 (YWSFNELVGLFFPAVTGIMAG) traverse the membrane as a helical segment. Residues 381 to 398 (SNRSASLKDTQKSIPVGT) lie on the Cytoplasmic side of the membrane. The chain crosses the membrane as a helical span at residues 399 to 419 (LAATLTTTSLYLISVLFFGAV). At 420–434 (ATRDKLLTDRLLTAT) the chain is on the extracellular side. The chain crosses the membrane as a helical span at residues 435–455 (IAWPFPAIVHVGIILSTLGAA). At 456 to 490 (LQSLTGAPRLLAAIANDDILPILNYFKVADTSEPH) the chain is on the cytoplasmic side. A helical membrane pass occupies residues 491–511 (IATLFTAFICIGCVVIGNLDL). Topologically, residues 512–515 (ITPT) are extracellular. A helical transmembrane segment spans residues 516–536 (VTMFYLLCYSGVNLSCFLLDL). The Cytoplasmic segment spans residues 537–544 (LDAPSWRP). The chain crosses the membrane as a helical span at residues 545-565 (RWKYHHWSLSFVGASLCIVIM). Topologically, residues 566–571 (FLISWS) are extracellular. Residues 572-592 (FTVVAIALASLIYKYVGLKGK) traverse the membrane as a helical segment. The Cytoplasmic segment spans residues 593-975 (AGDWGDGFKS…YHRDVVTLFT (383 aa)).

The protein belongs to the SLC12A transporter family. As to expression, expressed in young seedlings cotyledon tips, plant vasculature, root tips and axillary buds. Expressed in root vascular strand in the pericycle and other parenchyma cells bordering xylem vessels. Expressed in the xylem/symplast boundaries of rosette stems, rosette leaves and cauline leaves. Expressed in stipules, trichomes and hydathodes. Expressed in pollen grains.

The protein localises to the membrane. Cation/chloride cotransporter that mediates potassium-chloride and sodium-chloride cotransports. Involved in plant development and Cl(-) homeostasis. May be involved in long distance Cl(-) transport. Does not function as an H(+)-dependent cotransporter. This is Cation-chloride cotransporter 1 (CCC1) from Arabidopsis thaliana (Mouse-ear cress).